A 108-amino-acid chain; its full sequence is ATP-dependent Clp protease adapter protein ClpS (108 aa).

It belongs to the ClpS family. Binds to the N-terminal domain of the chaperone ClpA.

Its function is as follows. Involved in the modulation of the specificity of the ClpAP-mediated ATP-dependent protein degradation. This Ralstonia pickettii (strain 12J) protein is ATP-dependent Clp protease adapter protein ClpS.